The sequence spans 81 residues: Cytochrome b559 subunit alpha (81 aa).

Residues Val-21–Trp-35 form a helical membrane-spanning segment. His-23 is a binding site for heme.

It belongs to the PsbE/PsbF family. As to quaternary structure, heterodimer of an alpha subunit and a beta subunit. PSII is composed of 1 copy each of membrane proteins PsbA, PsbB, PsbC, PsbD, PsbE, PsbF, PsbH, PsbI, PsbJ, PsbK, PsbL, PsbM, PsbT, PsbX, PsbY, PsbZ, Psb30/Ycf12, peripheral proteins PsbO, CyanoQ (PsbQ), PsbU, PsbV and a large number of cofactors. It forms dimeric complexes. The cofactor is heme b.

The protein localises to the cellular thylakoid membrane. In terms of biological role, this b-type cytochrome is tightly associated with the reaction center of photosystem II (PSII). PSII is a light-driven water:plastoquinone oxidoreductase that uses light energy to abstract electrons from H(2)O, generating O(2) and a proton gradient subsequently used for ATP formation. It consists of a core antenna complex that captures photons, and an electron transfer chain that converts photonic excitation into a charge separation. This Rippkaea orientalis (strain PCC 8801 / RF-1) (Cyanothece sp. (strain PCC 8801)) protein is Cytochrome b559 subunit alpha.